The sequence spans 274 residues: Large ribosomal subunit protein uL2 (274 aa).

The interval 197–274 (NSDHALEKSG…SKYIIERRKK (78 aa)) is disordered. Basic residues-rich tracts occupy residues 207-220 (KAGR…RPHN) and 244-274 (PRSR…RRKK).

It belongs to the universal ribosomal protein uL2 family. As to quaternary structure, part of the 50S ribosomal subunit. Forms a bridge to the 30S subunit in the 70S ribosome.

Its function is as follows. One of the primary rRNA binding proteins. Required for association of the 30S and 50S subunits to form the 70S ribosome, for tRNA binding and peptide bond formation. It has been suggested to have peptidyltransferase activity; this is somewhat controversial. Makes several contacts with the 16S rRNA in the 70S ribosome. The sequence is that of Large ribosomal subunit protein uL2 from Porphyromonas gingivalis (strain ATCC BAA-308 / W83).